The chain runs to 113 residues: Endoribonuclease SymE (113 aa).

A SpoVT-AbrB domain is found at 29-74; sequence SRYPDYSRIPAITLKGQWLEAAGFATGTAVDVKVMEGCIVLTAQPP.

The protein belongs to the SymE family.

The protein resides in the cytoplasm. Involved in the degradation and recycling of damaged RNA. It is itself a target for degradation by the ATP-dependent protease Lon. This is Endoribonuclease SymE from Escherichia coli O6:K15:H31 (strain 536 / UPEC).